The chain runs to 475 residues: Protein nucleotidyltransferase YdiU (475 aa).

G82, G84, R85, K105, D117, G118, R168, and R175 together coordinate ATP. D240 serves as the catalytic Proton acceptor. Mg(2+)-binding residues include N241 and D250. ATP is bound at residue D250.

It belongs to the SELO family. The cofactor is Mg(2+). Mn(2+) is required as a cofactor.

The enzyme catalyses L-seryl-[protein] + ATP = 3-O-(5'-adenylyl)-L-seryl-[protein] + diphosphate. The catalysed reaction is L-threonyl-[protein] + ATP = 3-O-(5'-adenylyl)-L-threonyl-[protein] + diphosphate. It catalyses the reaction L-tyrosyl-[protein] + ATP = O-(5'-adenylyl)-L-tyrosyl-[protein] + diphosphate. It carries out the reaction L-histidyl-[protein] + UTP = N(tele)-(5'-uridylyl)-L-histidyl-[protein] + diphosphate. The enzyme catalyses L-seryl-[protein] + UTP = O-(5'-uridylyl)-L-seryl-[protein] + diphosphate. The catalysed reaction is L-tyrosyl-[protein] + UTP = O-(5'-uridylyl)-L-tyrosyl-[protein] + diphosphate. Its function is as follows. Nucleotidyltransferase involved in the post-translational modification of proteins. It can catalyze the addition of adenosine monophosphate (AMP) or uridine monophosphate (UMP) to a protein, resulting in modifications known as AMPylation and UMPylation. The sequence is that of Protein nucleotidyltransferase YdiU from Aeromonas salmonicida (strain A449).